Here is a 195-residue protein sequence, read N- to C-terminus: ATP-dependent Clp protease proteolytic subunit (195 aa).

Ser99 serves as the catalytic Nucleophile. His124 is a catalytic residue.

This sequence belongs to the peptidase S14 family. Fourteen ClpP subunits assemble into 2 heptameric rings which stack back to back to give a disk-like structure with a central cavity, resembling the structure of eukaryotic proteasomes.

It localises to the cytoplasm. The catalysed reaction is Hydrolysis of proteins to small peptides in the presence of ATP and magnesium. alpha-casein is the usual test substrate. In the absence of ATP, only oligopeptides shorter than five residues are hydrolyzed (such as succinyl-Leu-Tyr-|-NHMec, and Leu-Tyr-Leu-|-Tyr-Trp, in which cleavage of the -Tyr-|-Leu- and -Tyr-|-Trp bonds also occurs).. Its function is as follows. Cleaves peptides in various proteins in a process that requires ATP hydrolysis. Has a chymotrypsin-like activity. Plays a major role in the degradation of misfolded proteins. This chain is ATP-dependent Clp protease proteolytic subunit, found in Coxiella burnetii (strain CbuG_Q212) (Coxiella burnetii (strain Q212)).